Reading from the N-terminus, the 306-residue chain is Pantothenate kinase (306 aa).

Residue 91-98 (GSVAVGKS) participates in ATP binding.

This sequence belongs to the prokaryotic pantothenate kinase family.

Its subcellular location is the cytoplasm. The catalysed reaction is (R)-pantothenate + ATP = (R)-4'-phosphopantothenate + ADP + H(+). It functions in the pathway cofactor biosynthesis; coenzyme A biosynthesis; CoA from (R)-pantothenate: step 1/5. This is Pantothenate kinase from Streptococcus suis (strain 98HAH33).